Reading from the N-terminus, the 367-residue chain is Inositol-3-phosphate synthase (367 aa).

At serine 2 the chain carries N-acetylserine. An Isoglutamyl lysine isopeptide (Lys-Gln) (interchain with Q-Cter in protein Pup) cross-link involves residue lysine 73. Positions 78, 137, 157, 200, 235, and 248 each coordinate NAD(+).

The protein belongs to the myo-inositol 1-phosphate synthase family. It depends on NAD(+) as a cofactor. Post-translationally, pupylated at Lys-73 by the prokaryotic ubiquitin-like protein Pup, which leads to its degradation by the proteasome.

The catalysed reaction is D-glucose 6-phosphate = 1D-myo-inositol 3-phosphate. Key enzyme in myo-inositol biosynthesis pathway that catalyzes the conversion of glucose 6-phosphate to 1D-myo-inositol 3-phosphate in a NAD-dependent manner. In Mycobacterium tuberculosis (strain ATCC 25618 / H37Rv), this protein is Inositol-3-phosphate synthase (ino1).